Reading from the N-terminus, the 426-residue chain is Serine--tRNA ligase (426 aa).

231-233 (TAE) is a binding site for L-serine. Residue 262-264 (RSE) coordinates ATP. Residue glutamate 285 coordinates L-serine. 349 to 352 (EISS) provides a ligand contact to ATP. Serine 385 provides a ligand contact to L-serine.

This sequence belongs to the class-II aminoacyl-tRNA synthetase family. Type-1 seryl-tRNA synthetase subfamily. Homodimer. The tRNA molecule binds across the dimer.

Its subcellular location is the cytoplasm. The catalysed reaction is tRNA(Ser) + L-serine + ATP = L-seryl-tRNA(Ser) + AMP + diphosphate + H(+). It catalyses the reaction tRNA(Sec) + L-serine + ATP = L-seryl-tRNA(Sec) + AMP + diphosphate + H(+). It functions in the pathway aminoacyl-tRNA biosynthesis; selenocysteinyl-tRNA(Sec) biosynthesis; L-seryl-tRNA(Sec) from L-serine and tRNA(Sec): step 1/1. Its function is as follows. Catalyzes the attachment of serine to tRNA(Ser). Is also able to aminoacylate tRNA(Sec) with serine, to form the misacylated tRNA L-seryl-tRNA(Sec), which will be further converted into selenocysteinyl-tRNA(Sec). This is Serine--tRNA ligase from Saccharophagus degradans (strain 2-40 / ATCC 43961 / DSM 17024).